Consider the following 594-residue polypeptide: 4-alpha-glucanotransferase DPE1, chloroplastic/amyloplastic (594 aa).

Residues 1 to 37 (MATLSLPLPHLTQAIPARARPRPRPLRGIPARLLSCR) constitute a chloroplast transit peptide.

This sequence belongs to the disproportionating enzyme family.

The protein resides in the plastid. The protein localises to the chloroplast. Its subcellular location is the amyloplast. It catalyses the reaction Transfers a segment of a (1-&gt;4)-alpha-D-glucan to a new position in an acceptor, which may be glucose or a (1-&gt;4)-alpha-D-glucan.. Functionally, chloroplastic alpha-glucanotransferase involved in maltotriose metabolism. The protein is 4-alpha-glucanotransferase DPE1, chloroplastic/amyloplastic (DPE1) of Oryza sativa subsp. japonica (Rice).